The following is a 291-amino-acid chain: ATP synthase gamma chain (291 aa).

The protein belongs to the ATPase gamma chain family. As to quaternary structure, F-type ATPases have 2 components, CF(1) - the catalytic core - and CF(0) - the membrane proton channel. CF(1) has five subunits: alpha(3), beta(3), gamma(1), delta(1), epsilon(1). CF(0) has three main subunits: a, b and c.

It is found in the cell inner membrane. In terms of biological role, produces ATP from ADP in the presence of a proton gradient across the membrane. The gamma chain is believed to be important in regulating ATPase activity and the flow of protons through the CF(0) complex. The protein is ATP synthase gamma chain of Neisseria gonorrhoeae (strain ATCC 700825 / FA 1090).